Consider the following 285-residue polypeptide: 2-dehydro-3-deoxyphosphooctonate aldolase (285 aa).

It belongs to the KdsA family.

Its subcellular location is the cytoplasm. The catalysed reaction is D-arabinose 5-phosphate + phosphoenolpyruvate + H2O = 3-deoxy-alpha-D-manno-2-octulosonate-8-phosphate + phosphate. It functions in the pathway carbohydrate biosynthesis; 3-deoxy-D-manno-octulosonate biosynthesis; 3-deoxy-D-manno-octulosonate from D-ribulose 5-phosphate: step 2/3. Its pathway is bacterial outer membrane biogenesis; lipopolysaccharide biosynthesis. The chain is 2-dehydro-3-deoxyphosphooctonate aldolase from Verminephrobacter eiseniae (strain EF01-2).